The chain runs to 460 residues: MLNPGQTIAAIATAIVPQQGSIAIVRLSGSEAVAIAQRLFIAPGQQVWESHRILYGYVCNPRTGQRVDEALLLLMLAPRSYTKEDVVEFHCHGGMIAVQQVLQLCLEAGAVLAQPGEFTLRAFLHGRLDLTQAESVADLVGAKSPQAAQAALAGLQGKLIQPLQQLRRTCIDILAEIEARIDFEEDLPPLDLNQISSQIQHSLTEVNRILATADRGELLRTGLKVAIVGRPNVGKSSLLNAWSRSDRAIVTELPGTTRDVVESYLVVGGIPVQVLDTAGIRETSDQVEQIGVERSHKAAQAADLVLLVIDAQTGWTAEDQAIYTQVQERSLILVINKIDLVDQAFQPQACLPDPALTYLCTAAAQNQGIEDLESAILSKVQGGELEGANLDWAINQRQAAALTRAKLSLENVQETIANQLPLDFWTIDLREAIRALGEITGEEVTESVLDQIFSRFCIGK.

Positions 26, 88, and 127 each coordinate (6S)-5-formyl-5,6,7,8-tetrahydrofolate. A TrmE-type G domain is found at 222-381 (GLKVAIVGRP…LESAILSKVQ (160 aa)). A K(+)-binding site is contributed by Asn-232. Residues 232 to 237 (NVGKSS), 251 to 257 (TELPGTT), and 276 to 279 (DTAG) contribute to the GTP site. Residue Ser-236 coordinates Mg(2+). Residues Thr-251, Leu-253, and Thr-256 each contribute to the K(+) site. Thr-257 is a binding site for Mg(2+). Residue Lys-460 coordinates (6S)-5-formyl-5,6,7,8-tetrahydrofolate.

This sequence belongs to the TRAFAC class TrmE-Era-EngA-EngB-Septin-like GTPase superfamily. TrmE GTPase family. As to quaternary structure, homodimer. Heterotetramer of two MnmE and two MnmG subunits. It depends on K(+) as a cofactor.

The protein localises to the cytoplasm. Its function is as follows. Exhibits a very high intrinsic GTPase hydrolysis rate. Involved in the addition of a carboxymethylaminomethyl (cmnm) group at the wobble position (U34) of certain tRNAs, forming tRNA-cmnm(5)s(2)U34. The polypeptide is tRNA modification GTPase MnmE (Cyanothece sp. (strain PCC 7425 / ATCC 29141)).